Reading from the N-terminus, the 1010-residue chain is Phosphatidylserine decarboxylase proenzyme 2 (1010 aa).

C2 domains follow at residues 1-114 (MSQA…SSWE) and 247-370 (DFES…DKPC). Ca(2+)-binding residues include D342, S345, and D348. In terms of domain architecture, EF-hand spans 458–493 (LRRQLWMHLLQGNDTQMKGTLDLIELNYFVDCLGSN). Catalysis depends on charge relay system; for autoendoproteolytic cleavage activity residues D734, H793, and S880. The Schiff-base intermediate with substrate; via pyruvic acid; for decarboxylase activity role is filled by S880. Position 880 is a pyruvic acid (Ser); by autocatalysis (S880).

It belongs to the phosphatidylserine decarboxylase family. PSD-B subfamily. Eukaryotic type II sub-subfamily. As to quaternary structure, heterodimer of a large membrane-associated beta subunit and a small pyruvoyl-containing alpha subunit. Interacts with pstB2. This interaction may be a means to structurally tether the donor membrane (ER) harboring PstB2 to acceptor membranes (Golgi/endosomes) harboring PSD2 during PtdSer transport to the site of PtdEtn synthesis. It depends on pyruvate as a cofactor. Requires Ca(2+) as cofactor. Is synthesized initially as an inactive proenzyme. Formation of the active enzyme involves a self-maturation process in which the active site pyruvoyl group is generated from an internal serine residue via an autocatalytic post-translational modification. Two non-identical subunits are generated from the proenzyme in this reaction, and the pyruvate is formed at the N-terminus of the alpha chain, which is derived from the carboxyl end of the proenzyme. The autoendoproteolytic cleavage occurs by a canonical serine protease mechanism, in which the side chain hydroxyl group of the serine supplies its oxygen atom to form the C-terminus of the beta chain, while the remainder of the serine residue undergoes an oxidative deamination to produce ammonia and the pyruvoyl prosthetic group on the alpha chain. During this reaction, the Ser that is part of the protease active site of the proenzyme becomes the pyruvoyl prosthetic group, which constitutes an essential element of the active site of the mature decarboxylase.

The protein localises to the golgi apparatus membrane. It localises to the endosome membrane. The catalysed reaction is a 1,2-diacyl-sn-glycero-3-phospho-L-serine + H(+) = a 1,2-diacyl-sn-glycero-3-phosphoethanolamine + CO2. It participates in phospholipid metabolism; phosphatidylethanolamine biosynthesis; phosphatidylethanolamine from CDP-diacylglycerol: step 2/2. Catalyzes the formation of phosphatidylethanolamine (PtdEtn) from phosphatidylserine (PtdSer). Plays a central role in phospholipid metabolism and in the interorganelle trafficking of phosphatidylserine. The protein is Phosphatidylserine decarboxylase proenzyme 2 of Komagataella phaffii (strain GS115 / ATCC 20864) (Yeast).